We begin with the raw amino-acid sequence, 123 residues long: Large-conductance mechanosensitive channel (123 aa).

Helical transmembrane passes span 14 to 34 and 67 to 87; these read VIDM…VKSL and GSFL…FLMV.

Belongs to the MscL family. Homopentamer.

It localises to the cell membrane. Channel that opens in response to stretch forces in the membrane lipid bilayer. May participate in the regulation of osmotic pressure changes within the cell. In Limosilactobacillus reuteri (strain DSM 20016) (Lactobacillus reuteri), this protein is Large-conductance mechanosensitive channel.